A 322-amino-acid chain; its full sequence is MSPNFKLQCHFILIFLTALRGESRYLELREAADYDPFLLFSANLKRELAGEQPYRRALRCLDMLSLQGQFTFTADRPQLHCAAFFISEPEEFITIHYDQVSIDCQGGDFLKVFDGWILKGEKFPSSQDHPLPSAERYIDFCESGLSRRSIRSSQNVAMIFFRVHEPGNGFTLTIKTDPNLFPCNVISQTPNGKFTLVVPHQHRNCSFSIIYPVVIKISDLTLGHVNGLQLKKSSAGCEGIGDFVELLGGTGLDPSKMTPLADLCYPFHGPAQMKVGCDNTVVRMVSSGKHVNRVTFEYRQLEPYELENPNGNSIGEFCLSGL.

The signal sequence occupies residues 1 to 24 (MSPNFKLQCHFILIFLTALRGESR). Cystine bridges form between C60–C81, C104–C141, C183–C205, C237–C264, and C277–C318. Residue N204 is glycosylated (N-linked (GlcNAc...) asparagine).

This sequence belongs to the CRF-binding protein family.

Its subcellular location is the secreted. Functionally, binds CRF and inactivates it. May prevent inappropriate pituitary-adrenal stimulation in pregnancy. The protein is Corticotropin-releasing factor-binding protein (CRHBP) of Homo sapiens (Human).